The following is a 264-amino-acid chain: 2-hydroxyhexa-2,4-dienoate hydratase (264 aa).

This sequence belongs to the hydratase/decarboxylase family.

It catalyses the reaction (2Z,4Z)-2-hydroxyhexa-2,4-dienoate + H2O = 4-hydroxy-2-oxohexanoate. Involved in the catatabolism of testosterone. Catalyzes the hydration of 2-hydroxyhexa-2,4-dienoic acid to 4-hydroxy-2-oxohexanoic acid. This Comamonas testosteroni (Pseudomonas testosteroni) protein is 2-hydroxyhexa-2,4-dienoate hydratase (tesE).